The primary structure comprises 188 residues: Probable nicotinate-nucleotide adenylyltransferase (188 aa).

Belongs to the NadD family.

The catalysed reaction is nicotinate beta-D-ribonucleotide + ATP + H(+) = deamido-NAD(+) + diphosphate. It functions in the pathway cofactor biosynthesis; NAD(+) biosynthesis; deamido-NAD(+) from nicotinate D-ribonucleotide: step 1/1. Functionally, catalyzes the reversible adenylation of nicotinate mononucleotide (NaMN) to nicotinic acid adenine dinucleotide (NaAD). The protein is Probable nicotinate-nucleotide adenylyltransferase of Listeria welshimeri serovar 6b (strain ATCC 35897 / DSM 20650 / CCUG 15529 / CIP 8149 / NCTC 11857 / SLCC 5334 / V8).